The following is a 176-amino-acid chain: ADP-ribosylation factor-like protein 8d (176 aa).

Residues 21 to 26 (NSGKTS), 40 to 43 (MIPT), 62 to 66 (DLGGQ), and 121 to 124 (NKID) each bind GTP.

This sequence belongs to the small GTPase superfamily. Arf family. As to quaternary structure, interacts with tubulin.

The protein localises to the late endosome membrane. It is found in the lysosome membrane. Its subcellular location is the cytoplasm. It localises to the cytoskeleton. The protein resides in the spindle. In terms of biological role, may play a role in lysosome motility. May play a role in chromosome segregation. This Arabidopsis thaliana (Mouse-ear cress) protein is ADP-ribosylation factor-like protein 8d.